A 234-amino-acid polypeptide reads, in one-letter code: tRNA (guanine-N(1)-)-methyltransferase (234 aa).

S-adenosyl-L-methionine contacts are provided by residues Gly110 and Ile134–Leu139.

The protein belongs to the RNA methyltransferase TrmD family. In terms of assembly, homodimer.

It localises to the cytoplasm. The enzyme catalyses guanosine(37) in tRNA + S-adenosyl-L-methionine = N(1)-methylguanosine(37) in tRNA + S-adenosyl-L-homocysteine + H(+). In terms of biological role, specifically methylates guanosine-37 in various tRNAs. The chain is tRNA (guanine-N(1)-)-methyltransferase from Tropheryma whipplei (strain Twist) (Whipple's bacillus).